A 177-amino-acid polypeptide reads, in one-letter code: MKTRIHVVQGDITKLAVDVIVNAANPSLMGGGGVDGAIHRAAGPALLDACLKVRQQQGDCPTGHAVITLAGDLPAKAVVHTVGPVWRGGEQNEDQLLQDAYLNSLRLVAANSYTSVAFPAISTGVYGYPRAAAAEIAVKTVSEFITRHALPEQVYFVCYDEENAHLYERLLTQQGDE.

A Macro domain is found at 1 to 175; sequence MKTRIHVVQG…LYERLLTQQG (175 aa). Residues 11–12, Asn25, 33–35, and 122–126 each bind substrate; these read DI, GVD, and STGVY. Catalysis depends on Asp35, which acts as the Proton acceptor.

This sequence belongs to the MacroD-type family. YmdB subfamily. Homodimer. Interacts with RNase III.

It carries out the reaction 3''-O-acetyl-ADP-D-ribose + H2O = ADP-D-ribose + acetate + H(+). The enzyme catalyses 2''-O-acetyl-ADP-D-ribose + H2O = ADP-D-ribose + acetate + H(+). Deacetylates O-acetyl-ADP ribose to yield ADP-ribose and free acetate. Down-regulates ribonuclease 3 (RNase III) activity. Acts by interacting directly with the region of the ribonuclease that is required for dimerization/activation. This chain is O-acetyl-ADP-ribose deacetylase, found in Escherichia coli O157:H7.